The following is a 346-amino-acid chain: Putative toluene-4-sulfonate monooxygenase system iron-sulfur subunit TsaM2 (346 aa).

The Rieske domain occupies 7–108 (WYVAGMATDC…LVERHGLLWI (102 aa)). Residues C47, H49, C66, and H69 each contribute to the [2Fe-2S] cluster site.

Homotetramer. Part of the p-toluenesulfonate methyl-monooxygenase complex TsaBM, comprising the reductase TsaB and the oxygenase TsaM. Requires [2Fe-2S] cluster as cofactor.

The enzyme catalyses toluene-4-sulfonate + NADH + O2 + H(+) = 4-(hydroxymethyl)benzenesulfonate + NAD(+) + H2O. Functionally, involved in the toluene-4-sulfonate degradation pathway. Does not discriminate between the sulfonate and the carboxyl substituents and can also be involved in the p-toluenecarboxylate degradation pathway. In Comamonas testosteroni (Pseudomonas testosteroni), this protein is Putative toluene-4-sulfonate monooxygenase system iron-sulfur subunit TsaM2 (tsaM2).